The chain runs to 99 residues: Protein S100-Z (99 aa).

2 consecutive EF-hand domains span residues 13–48 and 50–85; these read IRIF…FLSC and KETQ…LTVA. The Ca(2+) site is built by Ser-20, Glu-23, Lys-28, Glu-33, Asp-63, Asn-65, Asp-67, Glu-69, and Glu-74.

This sequence belongs to the S-100 family. As to quaternary structure, homodimer. Interacts with S100P. Highest level of expression in spleen and leukocytes.

In Homo sapiens (Human), this protein is Protein S100-Z.